The chain runs to 224 residues: Deoxyribose-phosphate aldolase (224 aa).

Asp92 (proton donor/acceptor) is an active-site residue. Lys155 (schiff-base intermediate with acetaldehyde) is an active-site residue. The active-site Proton donor/acceptor is the Lys184.

The protein belongs to the DeoC/FbaB aldolase family. DeoC type 1 subfamily.

The protein resides in the cytoplasm. It carries out the reaction 2-deoxy-D-ribose 5-phosphate = D-glyceraldehyde 3-phosphate + acetaldehyde. The protein operates within carbohydrate degradation; 2-deoxy-D-ribose 1-phosphate degradation; D-glyceraldehyde 3-phosphate and acetaldehyde from 2-deoxy-alpha-D-ribose 1-phosphate: step 2/2. In terms of biological role, catalyzes a reversible aldol reaction between acetaldehyde and D-glyceraldehyde 3-phosphate to generate 2-deoxy-D-ribose 5-phosphate. The chain is Deoxyribose-phosphate aldolase from Clostridium perfringens (strain SM101 / Type A).